We begin with the raw amino-acid sequence, 61 residues long: Small ribosomal subunit protein uS14B (61 aa).

C24, C27, C40, and C43 together coordinate Zn(2+).

The protein belongs to the universal ribosomal protein uS14 family. Zinc-binding uS14 subfamily. As to quaternary structure, part of the 30S ribosomal subunit. Contacts proteins S3 and S10. It depends on Zn(2+) as a cofactor.

Its function is as follows. Binds 16S rRNA, required for the assembly of 30S particles and may also be responsible for determining the conformation of the 16S rRNA at the A site. This chain is Small ribosomal subunit protein uS14B, found in Mycolicibacterium gilvum (strain PYR-GCK) (Mycobacterium gilvum (strain PYR-GCK)).